A 219-amino-acid polypeptide reads, in one-letter code: Nuclear transcription factor Y subunit B-8 (219 aa).

The interval 1–26 is disordered; sequence MPDSDNDSGGPSNYAGGELSSPREQD. Residues 29 to 35 mediate DNA binding; sequence LPIANVS. The segment at 56 to 67 is subunit association domain (SAD); it reads VQECVSEFISFI. The span at 119 to 134 shows a compositional bias: low complexity; it reads AAASTTGAGTSAASTT. Disordered stretches follow at residues 119–142 and 166–219; these read AAAS…QHTA and GQPM…NRGA. Residues 190-206 are compositionally biased toward gly residues; that stretch reads GGRGGFGHHPGGGGGGS.

It belongs to the NFYB/HAP3 subunit family. As to quaternary structure, heterotrimeric transcription factor composed of three components, NF-YA, NF-YB and NF-YC. NF-YB and NF-YC must interact and dimerize for NF-YA association and DNA binding. Interacts with NFYC2, NFYC4 and NFYC6.

The protein localises to the cytoplasm. Component of the NF-Y/HAP transcription factor complex. This chain is Nuclear transcription factor Y subunit B-8, found in Oryza sativa subsp. japonica (Rice).